Here is a 306-residue protein sequence, read N- to C-terminus: MAGRHQNRSFPLPGVQSSGQVHAFGNCSDSDILEEDAEVYELRSRGKEKVRRSTSRDRLDDIIVLTKDIQEGDTLNAIALQYCCTVADIKRVNNLISDQDFFALRSIKIPVKKFSSLTETLCPPKGRQTSRHSSVQYSSEQQEILPANDSLAYSDSAGSFLKEVDRDIEQIVKCTDNKRENLNEVVSALTAQQMRFEPDNKNTQRKDPYYGADWGIGWWTAVVIMLIVGIITPVFYLLYYEILAKVDVSHHSTVDSSHLHSKITPPSQQREMENGIVPTKGIHFSQQDDHKLYSQDSQSPAAQQET.

Residues methionine 1–glycine 217 are Extracellular-facing. N-linked (GlcNAc...) asparagine glycosylation is present at asparagine 7. Serine 55 bears the Phosphoserine mark. The LysM domain maps to leucine 65–isoleucine 109. A helical membrane pass occupies residues tryptophan 218–leucine 238. The Cytoplasmic portion of the chain corresponds to tyrosine 239–threonine 306.

It is found in the cell membrane. It localises to the golgi apparatus. Essential for Golgi structural integrity. In Homo sapiens (Human), this protein is LysM and putative peptidoglycan-binding domain-containing protein 3 (LYSMD3).